Reading from the N-terminus, the 384-residue chain is Lipid-A-disaccharide synthase (384 aa).

This sequence belongs to the LpxB family.

The catalysed reaction is a lipid X + a UDP-2-N,3-O-bis[(3R)-3-hydroxyacyl]-alpha-D-glucosamine = a lipid A disaccharide + UDP + H(+). It participates in bacterial outer membrane biogenesis; LPS lipid A biosynthesis. Condensation of UDP-2,3-diacylglucosamine and 2,3-diacylglucosamine-1-phosphate to form lipid A disaccharide, a precursor of lipid A, a phosphorylated glycolipid that anchors the lipopolysaccharide to the outer membrane of the cell. The chain is Lipid-A-disaccharide synthase from Gloeothece citriformis (strain PCC 7424) (Cyanothece sp. (strain PCC 7424)).